The following is a 601-amino-acid chain: Elongation factor 4 (601 aa).

The tr-type G domain maps to 7–189; the sequence is SLIRNFSIIA…ALVTRLPPPV (183 aa). GTP is bound by residues 19-24 and 136-139; these read DHGKST and NKVD.

Belongs to the TRAFAC class translation factor GTPase superfamily. Classic translation factor GTPase family. LepA subfamily.

It is found in the cell inner membrane. The enzyme catalyses GTP + H2O = GDP + phosphate + H(+). In terms of biological role, required for accurate and efficient protein synthesis under certain stress conditions. May act as a fidelity factor of the translation reaction, by catalyzing a one-codon backward translocation of tRNAs on improperly translocated ribosomes. Back-translocation proceeds from a post-translocation (POST) complex to a pre-translocation (PRE) complex, thus giving elongation factor G a second chance to translocate the tRNAs correctly. Binds to ribosomes in a GTP-dependent manner. The chain is Elongation factor 4 from Gluconacetobacter diazotrophicus (strain ATCC 49037 / DSM 5601 / CCUG 37298 / CIP 103539 / LMG 7603 / PAl5).